The chain runs to 64 residues: Large ribosomal subunit protein uL29 (64 aa).

Belongs to the universal ribosomal protein uL29 family.

The chain is Large ribosomal subunit protein uL29 from Lacticaseibacillus paracasei (strain ATCC 334 / BCRC 17002 / CCUG 31169 / CIP 107868 / KCTC 3260 / NRRL B-441) (Lactobacillus paracasei).